The chain runs to 229 residues: 7-cyano-7-deazaguanine synthase (229 aa).

9-19 contributes to the ATP binding site; sequence LSGGLDSTTVL. Zn(2+)-binding residues include Cys192, Cys202, Cys205, and Cys208.

This sequence belongs to the QueC family. Zn(2+) is required as a cofactor.

The catalysed reaction is 7-carboxy-7-deazaguanine + NH4(+) + ATP = 7-cyano-7-deazaguanine + ADP + phosphate + H2O + H(+). It participates in purine metabolism; 7-cyano-7-deazaguanine biosynthesis. Catalyzes the ATP-dependent conversion of 7-carboxy-7-deazaguanine (CDG) to 7-cyano-7-deazaguanine (preQ(0)). The sequence is that of 7-cyano-7-deazaguanine synthase from Kineococcus radiotolerans (strain ATCC BAA-149 / DSM 14245 / SRS30216).